The chain runs to 447 residues: MGKEKVHINIVVIGHVDSGKSTTTGHLIYKLGGIDKRVIERFEKEAAEMNKRSFKYAWVLDKLKAERERGITIDIALWKFETSKYYCTVIDAPGHRDFIKNMITGTSQADCAVLIIDSTTGGFEAGISKDGQTREHALLAFTLGVKQMICCCNKMDATTPKYSKGRYEEIVKEVSSYLKKVGYNPDKIPFVPISGFEGDNMIERSTNLDWYKGPTLLDALDNINEPKRPSDKPLRLPLQDVYKIGGIGIVPVGRVETGVVKPGMLVTFAPTGLTTEVKSVEMHHEALTEALPGDNVGFNVKNVAVKDLKRGFVASNSKDDPAKEAANFTSQVIIMNHPGQIGNGYAPVLDCHTSHIAVKFAELITKIDRRSGKEIEKEPKFLKNGDAGMVKMIPTKPMVVETFAEYPPLGRFAVRDMRQTVAVGVIKSVEKKDPTGAKVTKAAAKKK.

The tr-type G domain occupies 5-230 (KVHINIVVIG…DNINEPKRPS (226 aa)). A G1 region spans residues 14–21 (GHVDSGKS). 14 to 21 (GHVDSGKS) serves as a coordination point for GTP. Lys-55 is subject to N6,N6-dimethyllysine. The tract at residues 70 to 74 (GITID) is G2. Lys-79 carries the N6,N6,N6-trimethyllysine modification. Residues 91-94 (DAPG) form a G3 region. Residues 91–95 (DAPGH) and 153–156 (NKMD) contribute to the GTP site. The segment at 153–156 (NKMD) is G4. N6,N6,N6-trimethyllysine is present on Lys-187. The G5 stretch occupies residues 194–196 (SGF). Residue Lys-261 is modified to N6-methyllysine. Glu-289 is subject to 5-glutamyl glycerylphosphorylethanolamine. At Lys-306 the chain carries N6,N6,N6-trimethyllysine. 5-glutamyl glycerylphosphorylethanolamine is present on Glu-362. N6,N6,N6-trimethyllysine is present on Lys-396.

This sequence belongs to the TRAFAC class translation factor GTPase superfamily. Classic translation factor GTPase family. EF-Tu/EF-1A subfamily.

It localises to the cytoplasm. Functionally, this protein promotes the GTP-dependent binding of aminoacyl-tRNA to the A-site of ribosomes during protein biosynthesis. In Vicia faba (Broad bean), this protein is Elongation factor 1-alpha.